Consider the following 250-residue polypeptide: Agamous-like MADS-box protein AGL8 homolog (250 aa).

Residues 3-57 (RGRVQLKRIENKINRQVTFSKRRSGLLKKAHEISVLCDAEVGLIVFSTKGKLFEY) form the MADS-box domain. A K-box domain is found at 88 to 178 (PGSWTLENAK…SKKVKEREKE (91 aa)). Disordered regions lie at residues 162-191 (QEQNNQLSKKVKEREKEVEQQNQWDQQNHE) and 206-241 (PHLGEASQNTNVVDNGEVEGGNSSQXQGAANNTVMP). Basic and acidic residues predominate over residues 171-180 (KVKEREKEVE). Polar residues-rich tracts occupy residues 181-191 (QQNQWDQQNHE) and 226-240 (GNSSQXQGAANNTVM).

Its subcellular location is the nucleus. Probable transcription factor. This chain is Agamous-like MADS-box protein AGL8 homolog (SCM1), found in Solanum commersonii (Commerson's wild potato).